We begin with the raw amino-acid sequence, 258 residues long: UDP-N-acetylenolpyruvoylglucosamine reductase (258 aa).

Arg-142 is a catalytic residue. Catalysis depends on Ser-184, which acts as the Proton donor. Glu-254 is an active-site residue.

This sequence belongs to the MurB family. FAD serves as cofactor.

It is found in the cytoplasm. The enzyme catalyses UDP-N-acetyl-alpha-D-muramate + NADP(+) = UDP-N-acetyl-3-O-(1-carboxyvinyl)-alpha-D-glucosamine + NADPH + H(+). It functions in the pathway cell wall biogenesis; peptidoglycan biosynthesis. Its function is as follows. Cell wall formation. This Campylobacter jejuni subsp. jejuni serotype O:2 (strain ATCC 700819 / NCTC 11168) protein is UDP-N-acetylenolpyruvoylglucosamine reductase.